We begin with the raw amino-acid sequence, 425 residues long: Serine--tRNA ligase (425 aa).

231 to 233 contributes to the L-serine binding site; that stretch reads TAE. 262–264 contacts ATP; it reads RSE. Position 285 (glutamate 285) interacts with L-serine. 349 to 352 contacts ATP; it reads EISS. Serine 385 contributes to the L-serine binding site.

The protein belongs to the class-II aminoacyl-tRNA synthetase family. Type-1 seryl-tRNA synthetase subfamily. In terms of assembly, homodimer. The tRNA molecule binds across the dimer.

Its subcellular location is the cytoplasm. The enzyme catalyses tRNA(Ser) + L-serine + ATP = L-seryl-tRNA(Ser) + AMP + diphosphate + H(+). It catalyses the reaction tRNA(Sec) + L-serine + ATP = L-seryl-tRNA(Sec) + AMP + diphosphate + H(+). It functions in the pathway aminoacyl-tRNA biosynthesis; selenocysteinyl-tRNA(Sec) biosynthesis; L-seryl-tRNA(Sec) from L-serine and tRNA(Sec): step 1/1. In terms of biological role, catalyzes the attachment of serine to tRNA(Ser). Is also able to aminoacylate tRNA(Sec) with serine, to form the misacylated tRNA L-seryl-tRNA(Sec), which will be further converted into selenocysteinyl-tRNA(Sec). In Bartonella henselae (strain ATCC 49882 / DSM 28221 / CCUG 30454 / Houston 1) (Rochalimaea henselae), this protein is Serine--tRNA ligase.